The sequence spans 268 residues: ClpXP adapter protein SpxH (268 aa).

Belongs to the SpxH family. Interacts with Spx.

The protein localises to the cytoplasm. Adapter protein required for efficient degradation of Spx by ClpXP under non-stress conditions. Interaction with Spx stabilizes Spx and exposes the C-terminus of Spx for recognition and proteolysis by ClpXP. The polypeptide is ClpXP adapter protein SpxH (Staphylococcus aureus (strain Mu3 / ATCC 700698)).